The sequence spans 309 residues: Malate dehydrogenase (309 aa).

Residues 8 to 13 and Asp33 each bind NAD(+); that span reads GAGLVG. 2 residues coordinate substrate: Arg82 and Arg88. NAD(+) contacts are provided by residues Asn95 and 118–120; that span reads VSN. 2 residues coordinate substrate: Asn120 and Arg151. Residue His175 is the Proton acceptor of the active site.

The protein belongs to the LDH/MDH superfamily. MDH type 3 family.

It carries out the reaction (S)-malate + NAD(+) = oxaloacetate + NADH + H(+). In terms of biological role, catalyzes the reversible oxidation of malate to oxaloacetate. In Pseudomonas putida (strain ATCC 700007 / DSM 6899 / JCM 31910 / BCRC 17059 / LMG 24140 / F1), this protein is Malate dehydrogenase.